A 344-amino-acid chain; its full sequence is Ubiquitin-associated domain-containing protein 2 (344 aa).

A signal peptide spans 1 to 34; it reads MFTSTGSNGLYKAPLSKSLLLVPSAISILLTLLF. The Extracellular portion of the chain corresponds to 35–91; sequence QHYQKFFAYNLQAIKEDFQIWRLVCGRVICLDLKDTFCSSLLIYNFRIFERRYGSRK. Residues 92 to 111 form a helical membrane-spanning segment; the sequence is FSSFLLGAWTLSALFDLLLV. Residues 112–123 are Cytoplasmic-facing; it reads EAAQYVFGITIN. Residues 124-142 form a helical membrane-spanning segment; it reads SLPSGFLGPVFALFVPFYC. Topologically, residues 143–162 are extracellular; it reads SIPRVQVTQVLGYFSITNKT. N-linked (GlcNAc...) asparagine glycosylation occurs at Asn-160. The helical transmembrane segment at 163–183 threads the bilayer; the sequence is LVYILGLQLLTSGSYIWILAL. Topologically, residues 184 to 344 are cytoplasmic; sequence SGLISGICYN…NVATNFLLQH (161 aa). Residues 284-307 form a disordered region; sequence RHNENYQDHHPSDQDTPPPTEVSE. Residues 286 to 296 show a composition bias toward basic and acidic residues; it reads NENYQDHHPSD. The 41-residue stretch at 304 to 344 folds into the UBA domain; sequence EVSEEQVARLMEMGFSRGDALEALRASNNDLNVATNFLLQH.

It localises to the endoplasmic reticulum membrane. Its function is as follows. Restricts trafficking of FAF2 from the endoplasmic reticulum to lipid droplets. May negatively regulate the canonical Wnt signaling pathway in the lymphocytes. The chain is Ubiquitin-associated domain-containing protein 2 (UBAC2) from Gallus gallus (Chicken).